Consider the following 166-residue polypeptide: Protein SprT (166 aa).

The SprT-like domain maps to 20-164 (EHLANANRKL…CVRCGDLLVA (145 aa)). His-78 contributes to the Zn(2+) binding site. Glu-79 is an active-site residue. His-82 provides a ligand contact to Zn(2+).

Belongs to the SprT family. Requires Zn(2+) as cofactor.

The protein localises to the cytoplasm. The sequence is that of Protein SprT from Klebsiella pneumoniae subsp. pneumoniae (strain ATCC 700721 / MGH 78578).